A 329-amino-acid polypeptide reads, in one-letter code: Ribosomal protein L11 methyltransferase (329 aa).

Residues T177, G198, D220, and N264 each coordinate S-adenosyl-L-methionine.

The protein belongs to the methyltransferase superfamily. PrmA family.

The protein localises to the cytoplasm. It catalyses the reaction L-lysyl-[protein] + 3 S-adenosyl-L-methionine = N(6),N(6),N(6)-trimethyl-L-lysyl-[protein] + 3 S-adenosyl-L-homocysteine + 3 H(+). Its function is as follows. Methylates ribosomal protein L11. This Helicobacter pylori (strain HPAG1) protein is Ribosomal protein L11 methyltransferase.